A 209-amino-acid polypeptide reads, in one-letter code: Protein-L-isoaspartate O-methyltransferase (209 aa).

Ser-59 is a catalytic residue.

This sequence belongs to the methyltransferase superfamily. L-isoaspartyl/D-aspartyl protein methyltransferase family. Monomer.

Its subcellular location is the cytoplasm. It carries out the reaction [protein]-L-isoaspartate + S-adenosyl-L-methionine = [protein]-L-isoaspartate alpha-methyl ester + S-adenosyl-L-homocysteine. In terms of biological role, catalyzes the methyl esterification of L-isoaspartyl residues in peptides and proteins that result from spontaneous decomposition of normal L-aspartyl and L-asparaginyl residues. It plays a role in the repair and/or degradation of damaged proteins. This is Protein-L-isoaspartate O-methyltransferase (pcm) from Helicobacter pylori (strain J99 / ATCC 700824) (Campylobacter pylori J99).